Consider the following 2551-residue polypeptide: Probable polyketide synthase 13 (2551 aa).

Residues 10-434 (ENDVAIIGIG…GSNCCLILSQ (425 aa)) enclose the Ketosynthase family 3 (KS3) domain. Catalysis depends on for beta-ketoacyl synthase activity residues Cys176, His317, and His358. The acyl/malonyl transferase stretch occupies residues 621–654 (GIEVSFIIGHSLGEIPAAYCSGMINIDTLCYLIY). Ser631 (for acyl/malonyl transferase activity) is an active-site residue. Positions 928–1057 (TDNLGYLNEN…GDFQLSNHSS (130 aa)) are N-terminal hotdog fold. Residues 928-1226 (TDNLGYLNEN…CTSLTPIKES (299 aa)) form the PKS/mFAS DH domain. His961 functions as the Proton acceptor; for dehydratase activity in the catalytic mechanism. The interval 1076 to 1226 (NLTKLSRDEL…CTSLTPIKES (151 aa)) is C-terminal hotdog fold. Catalysis depends on Asp1136, which acts as the Proton donor; for dehydratase activity. The 78-residue stretch at 2465-2542 (DCQTIIKDSF…SSIQYTINSF (78 aa)) folds into the Carrier domain. Residue Ser2502 is modified to O-(pantetheine 4'-phosphoryl)serine.

It depends on pantetheine 4'-phosphate as a cofactor.

In terms of biological role, probable polyketide synthase. The sequence is that of Probable polyketide synthase 13 (pks13) from Dictyostelium discoideum (Social amoeba).